Here is a 286-residue protein sequence, read N- to C-terminus: Cbb3-type cytochrome c oxidase subunit CcoP (286 aa).

2 helical membrane-spanning segments follow: residues 11 to 31 (FGLI…SSLI) and 62 to 82 (VGWI…FFFG). Cytochrome c domains follow at residues 116–195 (ELVD…MAEL) and 205–286 (QLID…LSNR). Positions 129, 132, 133, 174, 219, 222, 223, and 264 each coordinate heme c.

The protein belongs to the CcoP / FixP family. In terms of assembly, component of the cbb3-type cytochrome c oxidase at least composed of CcoN, CcoO, CcoQ and CcoP. It depends on heme c as a cofactor.

It localises to the cell inner membrane. The protein operates within energy metabolism; oxidative phosphorylation. Its function is as follows. C-type cytochrome. Part of the cbb3-type cytochrome c oxidase complex. CcoP subunit is required for transferring electrons from donor cytochrome c via its heme groups to CcoO subunit. From there, electrons are shuttled to the catalytic binuclear center of CcoN subunit where oxygen reduction takes place. The complex also functions as a proton pump. The protein is Cbb3-type cytochrome c oxidase subunit CcoP of Helicobacter pylori (strain ATCC 700392 / 26695) (Campylobacter pylori).